The sequence spans 327 residues: Mitochondrial thiamine pyrophosphate carrier 1 (327 aa).

Solcar repeat units follow at residues 13-114 (GSKL…AAQL), 126-214 (PAAA…LRAP), and 222-317 (FWGG…VLRA). A run of 6 helical transmembrane segments spans residues 16–36 (LQVV…IAPL), 95–111 (LLYI…YRSA), 132–152 (FVAG…LDLL), 189–209 (GIGP…AAYE), 223–245 (WGGQ…VFPL), and 292–309 (GLTV…VTMW).

This sequence belongs to the mitochondrial carrier (TC 2.A.29) family.

It localises to the mitochondrion inner membrane. Mitochondrial transporter that mediates uptake of thiamine pyrophosphate (ThPP) into mitochondria. In Pyricularia oryzae (strain 70-15 / ATCC MYA-4617 / FGSC 8958) (Rice blast fungus), this protein is Mitochondrial thiamine pyrophosphate carrier 1 (TPC1).